The chain runs to 156 residues: CKLF-like MARVEL transmembrane domain-containing protein 5 (156 aa).

Positions 29-146 constitute an MARVEL domain; it reads FLSSLKGILL…DAFKIYRTEL (118 aa). A run of 4 helical transmembrane segments spans residues 35-55, 56-76, 93-113, and 119-139; these read GILL…FTAS, ISAY…FLFL, LDFL…FAAV, and AAIA…YDAF.

It belongs to the chemokine-like factor family.

It is found in the membrane. The polypeptide is CKLF-like MARVEL transmembrane domain-containing protein 5 (Cmtm5) (Mus musculus (Mouse)).